Here is a 176-residue protein sequence, read N- to C-terminus: Peptide deformylase (176 aa).

Fe cation is bound by residues cysteine 100 and histidine 142. The active site involves glutamate 143. Residue histidine 146 coordinates Fe cation.

The protein belongs to the polypeptide deformylase family. Requires Fe(2+) as cofactor.

It carries out the reaction N-terminal N-formyl-L-methionyl-[peptide] + H2O = N-terminal L-methionyl-[peptide] + formate. Removes the formyl group from the N-terminal Met of newly synthesized proteins. Requires at least a dipeptide for an efficient rate of reaction. N-terminal L-methionine is a prerequisite for activity but the enzyme has broad specificity at other positions. This is Peptide deformylase from Elusimicrobium minutum (strain Pei191).